The sequence spans 382 residues: Galactokinase (382 aa).

Glutamate 34–aspartate 37 lines the substrate pocket. Position 124–130 (glycine 124–serine 130) interacts with ATP. Serine 130 and glutamate 162 together coordinate Mg(2+). The active-site Proton acceptor is the aspartate 174. Tyrosine 223 is a substrate binding site.

The protein belongs to the GHMP kinase family. GalK subfamily.

It localises to the cytoplasm. The enzyme catalyses alpha-D-galactose + ATP = alpha-D-galactose 1-phosphate + ADP + H(+). Its pathway is carbohydrate metabolism; galactose metabolism. Catalyzes the transfer of the gamma-phosphate of ATP to D-galactose to form alpha-D-galactose-1-phosphate (Gal-1-P). The protein is Galactokinase of Escherichia coli (strain SMS-3-5 / SECEC).